Reading from the N-terminus, the 461-residue chain is Decaprenylphosphoryl-beta-D-ribose oxidase (461 aa).

Residues 19-194 (TAPSVANVLR…MRATIEMTPT (176 aa)) enclose the FAD-binding PCMH-type domain. FAD contacts are provided by residues 53 to 63 (ARGLGRSYGDN), G117, 122 to 125 (TVGG), 129 to 132 (CDIH), I184, and Y415.

This sequence belongs to the DprE1 family. In terms of assembly, monomer. Although forming apparent dimer in crystals, DprE1 does not dimerize appreciably in solution. Interacts with DprE2 to form an epimerase complex.

The protein resides in the periplasm. The catalysed reaction is trans,octa-cis-decaprenylphospho-beta-D-ribofuranose + FAD + H(+) = trans,octa-cis-decaprenylphospho-beta-D-erythro-pentofuranosid-2-ulose + FADH2. The protein operates within cell wall biogenesis; cell wall polysaccharide biosynthesis. Is inhibited by 8-nitro-benzothiazinones (BTZs) such as BTZ043 and PBTZ169; BTZs are a new class of antimycobacterial agents that kill M.tuberculosis in vitro, ex vivo, and in mouse models of tuberculosis. Is also inhibited by dinitrobenzamide derivatives (DNBs), which thus block formation of both cell-wall lipoarabinomannan and arabinogalactan via inhibition of decaprenyl-phospho-arabinose (DPA) synthesis; DNBs show high activity against intracellular growth of M.tuberculosis inside macrophages, including extensively drug resistant (XDR) strains. BTZs and DNBs are suicide inhibitors that act via covalent modification of DprE1; the essential nitro group of these compounds is reduced by DprE1 to a nitroso group, which then specifically reacts with Cys-387 of DprE1 to form an irreversible semimercaptal adduct. Many other compounds with diverse scaffolds were found to act as either covalent (e.g. nitroquinoxalines, nitroimidazoles) or non-covalent (e.g. the benzothiazole derivative TCA1, the 2-carboxyquinoxaline Ty38C, 8-pyrrole-benzothiazinones, 1,4-azaindoles, pyrazolopyridones, 4-aminoquinolone piperidine amides) DprE1 inhibitors. Component of the DprE1-DprE2 complex that catalyzes the 2-step epimerization of decaprenyl-phospho-ribose (DPR) to decaprenyl-phospho-arabinose (DPA), a key precursor that serves as the arabinose donor required for the synthesis of cell-wall arabinans. DprE1 catalyzes the first step of epimerization, namely FAD-dependent oxidation of the C2' hydroxyl of DPR to yield the keto intermediate decaprenyl-phospho-2'-keto-D-arabinose (DPX). The intermediate DPX is then transferred to DprE2 subunit of the epimerase complex, most probably through a 'substrate channel' at the interface of DprE1-DprE2 complex. Can also use farnesyl-phosphoryl-beta-D-ribofuranose (FPR) as substrate in vitro. In terms of biological role, dprE1 is a highly vulnerable and fully validated tuberculosis drug target. The sequence is that of Decaprenylphosphoryl-beta-D-ribose oxidase from Mycobacterium tuberculosis (strain CDC 1551 / Oshkosh).